The sequence spans 382 residues: D-galactonate dehydratase (382 aa).

D183 contacts Mg(2+). H185 (proton donor) is an active-site residue. Mg(2+)-binding residues include E209 and E235. Catalysis depends on H285, which acts as the Proton acceptor.

The protein belongs to the mandelate racemase/muconate lactonizing enzyme family. GalD subfamily. Mg(2+) serves as cofactor.

The catalysed reaction is D-galactonate = 2-dehydro-3-deoxy-D-galactonate + H2O. The protein operates within carbohydrate acid metabolism; D-galactonate degradation; D-glyceraldehyde 3-phosphate and pyruvate from D-galactonate: step 1/3. Its function is as follows. Catalyzes the dehydration of D-galactonate to 2-keto-3-deoxy-D-galactonate. In Ralstonia nicotianae (strain ATCC BAA-1114 / GMI1000) (Ralstonia solanacearum), this protein is D-galactonate dehydratase.